The primary structure comprises 856 residues: Translation initiation factor IF-2 (856 aa).

Disordered regions lie at residues 1 to 248 (MSDN…ARAR) and 254 to 273 (KRAREKDKRAHQAGTVQQKQ). The span at 22–38 (ETGQVKQSFSHGRSNTV) shows a compositional bias: polar residues. Residues 83-93 (APRPAPAPIPT) are compositionally biased toward pro residues. The segment covering 100–150 (LERREQQERLLREAEEARMAALEETRRREERAKAEATEEERRRAEENRRAE) has biased composition (basic and acidic residues). The segment covering 156–196 (AAAAAAAAATAEAETAAAAPREEAPAAAGTAEEAPRTSSST) has biased composition (low complexity). The span at 197 to 209 (MPPPRRFTPVPSP) shows a compositional bias: pro residues. A compositionally biased stretch (basic and acidic residues) spans 210-229 (KRPEPPRPQQRDRKGDDRRQ). One can recognise a tr-type G domain in the interval 356–526 (PRPPVVTIMG…ELQAELLELK (171 aa)). The interval 365–372 (GHVDHGKT) is G1. 365-372 (GHVDHGKT) serves as a coordination point for GTP. The G2 stretch occupies residues 390–394 (GITQH). The interval 412–415 (DTPG) is G3. GTP-binding positions include 412-416 (DTPGH) and 466-469 (NKMD). The tract at residues 466-469 (NKMD) is G4. Residues 502-504 (SAL) are G5.

Belongs to the TRAFAC class translation factor GTPase superfamily. Classic translation factor GTPase family. IF-2 subfamily.

The protein resides in the cytoplasm. Its function is as follows. One of the essential components for the initiation of protein synthesis. Protects formylmethionyl-tRNA from spontaneous hydrolysis and promotes its binding to the 30S ribosomal subunits. Also involved in the hydrolysis of GTP during the formation of the 70S ribosomal complex. The sequence is that of Translation initiation factor IF-2 from Rhizorhabdus wittichii (strain DSM 6014 / CCUG 31198 / JCM 15750 / NBRC 105917 / EY 4224 / RW1) (Sphingomonas wittichii).